The sequence spans 75 residues: MKTEIHPNYHSITVVMTDGTEYQTRSTWGKEGDKLNLDIDPRSHPAWTGGTQQVLDRGGRVSRFQKKFSGFLKKD.

The protein belongs to the bacterial ribosomal protein bL31 family. Type A subfamily. In terms of assembly, part of the 50S ribosomal subunit.

In terms of biological role, binds the 23S rRNA. In Rhodopseudomonas palustris (strain BisB5), this protein is Large ribosomal subunit protein bL31.